Reading from the N-terminus, the 171-residue chain is Large ribosomal subunit protein uL10 (171 aa).

This sequence belongs to the universal ribosomal protein uL10 family. Part of the ribosomal stalk of the 50S ribosomal subunit. The N-terminus interacts with L11 and the large rRNA to form the base of the stalk. The C-terminus forms an elongated spine to which L12 dimers bind in a sequential fashion forming a multimeric L10(L12)X complex.

In terms of biological role, forms part of the ribosomal stalk, playing a central role in the interaction of the ribosome with GTP-bound translation factors. This is Large ribosomal subunit protein uL10 from Maricaulis maris (strain MCS10) (Caulobacter maris).